Here is a 941-residue protein sequence, read N- to C-terminus: MMTSNILSRFLPPNGSPSVYETIRQHDNHSDASDVEERAGMAFEDEHGDRFSDRELEDALADAGRDDSPGPSEPFLPRSPPTKRDEGGFLKAGSRRRKFSRSGRIHAASPRHKFDDSDDDVPPSLLVEGDQDDDDVLRSKLPPPPRSIDPPNVEPPPRPSPRDDRVHWEAARDRLPLHDTNRRAHHASLWSAGYPNLALVDPKEKALWMWANVENLDNFLKEVYTYFLGNGIWSILLNRVLSLLTFAFVVGFSIFLTNCIDYHKVRGSRTLDDILIQKCTKQMSMSATFLLWLLSFFWIGKAFQYLLDIRRLKHMHDFYHYLLGISDAEIQSISWQEVVSRLMTLRDSNPATAGAVSAKHRKFMGSQSKQRMDAHDIANRLMRKENYLIALINKDILDLTLPIPFLRNRQLFSRTLEWNINLCIMDYVFNEQGQVRTLFLKDTHRRALSEGLRRRFMFAGIMNIFVAPFIVVYFMMHYFFRYFNEYKKNPSQIGSRQYTPLAEWKFREFNELWHLFERRVNMSYPFASRYVDQFPKDKMVQFAGFVAFVSGALASVLALASVVDPELFLGFEITHDRTVLFYLGVFGSIWAVAQGLVPEETNVFDPEYALLEVINFTHYFPGHWKGRLHSDDVRKDFAVLYQMKIVIFLEEILSMIFTPFILWFSLPKCSDRLIDFFREFTVHVDGMGYLCSFAVFDFKKGTNVISQGDTGRRDAARQDLRADYFSTKDGKMLASYYGFLDNYGANPRSGHPSTKRQFHPPPTFPTLGSPSAIEMGNFGDRPAAAGLMGQQSTYGAAPRFGPAGMGDHLSPAPSMLLDPHHQPSASGFRSTHRANPYPRYRASRPPPTISDPIEDEDPPAGKGRSAVKSSPGVGSSGGGIGTSDSNLGESWRMNLVGDEVEEEDEGGENVDTLAGGGGVLGLIQQFQKVNQDNRGRTTVGI.

The segment at 1–164 is disordered; it reads MMTSNILSRF…PPPRPSPRDD (164 aa). Residues 1–239 are Cytoplasmic-facing; that stretch reads MMTSNILSRF…NGIWSILLNR (239 aa). Positions 23–54 are enriched in basic and acidic residues; it reads IRQHDNHSDASDVEERAGMAFEDEHGDRFSDR. Positions 71-80 are enriched in pro residues; that stretch reads PSEPFLPRSP. Residues 93–104 show a composition bias toward basic residues; the sequence is GSRRRKFSRSGR. A compositionally biased stretch (pro residues) spans 141-159; the sequence is LPPPPRSIDPPNVEPPPRP. A helical membrane pass occupies residues 240-260; sequence VLSLLTFAFVVGFSIFLTNCI. At 261-286 the chain is on the lumenal side; the sequence is DYHKVRGSRTLDDILIQKCTKQMSMS. A helical membrane pass occupies residues 287-307; the sequence is ATFLLWLLSFFWIGKAFQYLL. Residues 308-455 are Cytoplasmic-facing; it reads DIRRLKHMHD…RALSEGLRRR (148 aa). Residues 456–476 lie within the membrane without spanning it; it reads FMFAGIMNIFVAPFIVVYFMM. Over 477 to 541 the chain is Cytoplasmic; that stretch reads HYFFRYFNEY…DQFPKDKMVQ (65 aa). Residues 542–562 traverse the membrane as a helical segment; that stretch reads FAGFVAFVSGALASVLALASV. At 563-577 the chain is on the lumenal side; it reads VDPELFLGFEITHDR. The helical transmembrane segment at 578–598 threads the bilayer; the sequence is TVLFYLGVFGSIWAVAQGLVP. The Cytoplasmic portion of the chain corresponds to 599 to 644; sequence EETNVFDPEYALLEVINFTHYFPGHWKGRLHSDDVRKDFAVLYQMK. An intramembrane segment occupies 645 to 665; sequence IVIFLEEILSMIFTPFILWFS. The Cytoplasmic portion of the chain corresponds to 666-941; it reads LPKCSDRLID…DNRGRTTVGI (276 aa). Residues 795–889 are disordered; it reads GAAPRFGPAG…IGTSDSNLGE (95 aa).

The protein belongs to the ATG9 family. In terms of assembly, homotrimer; forms a homotrimer with a central pore that forms a path between the two membrane leaflets. Phosphorylated by atg1. Atg1 phosphorylation is required for preautophagosome elongation.

It localises to the preautophagosomal structure membrane. Its subcellular location is the cytoplasmic vesicle membrane. The protein localises to the golgi apparatus membrane. It is found in the endoplasmic reticulum membrane. The enzyme catalyses a 1,2-diacyl-sn-glycero-3-phosphocholine(in) = a 1,2-diacyl-sn-glycero-3-phosphocholine(out). The catalysed reaction is a 1,2-diacyl-sn-glycero-3-phospho-L-serine(in) = a 1,2-diacyl-sn-glycero-3-phospho-L-serine(out). It catalyses the reaction a 1,2-diacyl-sn-glycero-3-phosphoethanolamine(in) = a 1,2-diacyl-sn-glycero-3-phosphoethanolamine(out). It carries out the reaction a 1,2-diacyl-sn-glycero-3-phospho-(1D-myo-inositol-3-phosphate)(in) = a 1,2-diacyl-sn-glycero-3-phospho-(1D-myo-inositol-3-phosphate)(out). In terms of biological role, phospholipid scramblase involved in autophagy and cytoplasm to vacuole transport (Cvt) vesicle formation. Cycles between the preautophagosomal structure/phagophore assembly site (PAS) and the cytoplasmic vesicle pool and supplies membrane for the growing autophagosome. Lipid scramblase activity plays a key role in preautophagosomal structure/phagophore assembly by distributing the phospholipids that arrive through atg2 from the cytoplasmic to the luminal leaflet of the bilayer, thereby driving autophagosomal membrane expansion. Required for mitophagy. Also involved in endoplasmic reticulum-specific autophagic process and is essential for the survival of cells subjected to severe ER stress. Different machineries are required for anterograde trafficking to the PAS during either the Cvt pathway or bulk autophagy and for retrograde trafficking. This Aspergillus niger (strain ATCC MYA-4892 / CBS 513.88 / FGSC A1513) protein is Autophagy-related protein 9 (atg9).